We begin with the raw amino-acid sequence, 56 residues long: Small ribosomal subunit protein uS14z/uS14y/uS14x (56 aa).

Zn(2+) is bound by residues Cys-21, Cys-24, Cys-39, and Cys-42.

The protein belongs to the universal ribosomal protein uS14 family. The cofactor is Zn(2+).

The sequence is that of Small ribosomal subunit protein uS14z/uS14y/uS14x (RPS29A) from Arabidopsis thaliana (Mouse-ear cress).